Here is a 555-residue protein sequence, read N- to C-terminus: Cytochrome P450 monooxygeanse terQ (555 aa).

Residues V10 to L30 form a helical membrane-spanning segment. A heme-binding site is contributed by C479. The disordered stretch occupies residues D535–S555.

This sequence belongs to the cytochrome P450 family. It depends on heme as a cofactor.

The protein localises to the membrane. It participates in secondary metabolite biosynthesis. Its function is as follows. Cytochrome P450 monooxygeanse; part of the gene cluster that mediates the biosynthesis of terpendoles, indole-diterpene (IDT) mycotoxins including terpendole I, terpendole K, terpendole C, as well as the kinesin Eg5 inhibitor terpendole E. TerQ is a C11-hydroxylating enzyme that converts paspalline into terpendole E. Is also able to hydroxylate 13-desoxyterpendole I at C-13 to produce terpendole I. Terpendoles biosynthesis begins with the synthesis of geranylgeranyl diphosphate (GGPP) by a yet unidentified GGPP synthase. Condensation of indole-3-glycerol phosphate with GGPP by the prenyltransferase terC then forms 3-geranylgeranylindole (3-GGI), followed by epoxidation and cyclization of this intermediate (by the FAD-dependent monooxygeanse terM and the terpene cyclase terB) to form paspaline. The cytochrome monooxygenase terQ then hydroxylates paspalline at C-11 to yield terpendole E. The cytochrome monooxygenase terP converts terpendole E to 13-desoxyterpendole I, and terQ converts 13-desoxyterpendole I into terpendole I. TerF and terK are required for conversion of terpendole I to terpendole C which is further converted to terpendole K. The polypeptide is Cytochrome P450 monooxygeanse terQ (Tolypocladium album (Soil fungus)).